The following is a 417-amino-acid chain: Imidazolonepropionase (417 aa).

The Fe(3+) site is built by His80 and His82. 2 residues coordinate Zn(2+): His80 and His82. 3 residues coordinate 4-imidazolone-5-propanoate: Arg89, Tyr152, and His187. An N-formimidoyl-L-glutamate-binding site is contributed by Tyr152. His252 contacts Fe(3+). His252 contacts Zn(2+). Glu255 is a 4-imidazolone-5-propanoate binding site. Asp326 contacts Fe(3+). A Zn(2+)-binding site is contributed by Asp326. N-formimidoyl-L-glutamate-binding residues include Asn328 and Gly330. Residue Ser331 participates in 4-imidazolone-5-propanoate binding.

It belongs to the metallo-dependent hydrolases superfamily. HutI family. Zn(2+) serves as cofactor. Requires Fe(3+) as cofactor.

It is found in the cytoplasm. The enzyme catalyses 4-imidazolone-5-propanoate + H2O = N-formimidoyl-L-glutamate. The protein operates within amino-acid degradation; L-histidine degradation into L-glutamate; N-formimidoyl-L-glutamate from L-histidine: step 3/3. In terms of biological role, catalyzes the hydrolytic cleavage of the carbon-nitrogen bond in imidazolone-5-propanoate to yield N-formimidoyl-L-glutamate. It is the third step in the universal histidine degradation pathway. This Bacteroides fragilis (strain YCH46) protein is Imidazolonepropionase.